Consider the following 559-residue polypeptide: uncharacterized protein (559 aa).

Residues 1–10 show a composition bias toward basic and acidic residues; sequence MSGRRGDHPG. A disordered region spans residues 1-76; the sequence is MSGRRGDHPG…ERSRVPPRTT (76 aa). 11 helical membrane-spanning segments follow: residues 128-148, 155-175, 186-206, 208-228, 259-279, 283-303, 358-378, 387-407, 428-448, 490-510, and 515-535; these read FAVD…AAAS, VALY…LIGP, VALA…IMNY, GATG…MMVF, VFGL…VEFV, LFQL…GASL, LWGN…PAFV, WVQL…NFAG, VLVT…ATAI, LAWV…WVGF, and ALLI…SLIP.

The protein to M.leprae ML2143.

The protein resides in the cell membrane. This is an uncharacterized protein from Mycobacterium tuberculosis (strain CDC 1551 / Oshkosh).